We begin with the raw amino-acid sequence, 369 residues long: Transcription factor GTE6 (369 aa).

The Bromo domain maps to 89 to 198; sequence KRMQDLMRQF…EKFEEKWAHF (110 aa). The stretch at 201 to 263 forms a coiled coil; the sequence is KVQEEEKIRE…VERCRKITIE (63 aa). One can recognise an NET domain in the interval 250–331; that stretch reads MRKVVERCRK…DALDNAMKKK (82 aa). The segment covering 329 to 348 has biased composition (basic and acidic residues); sequence KKKKEEETKTRELSGAQKKE. Residues 329–369 form a disordered region; sequence KKKKEEETKTRELSGAQKKEVSKKRNATTKLAERKTKRSRI. The short motif at 351–368 is the Bipartite nuclear localization signal element; the sequence is KKRNATTKLAERKTKRSR.

As to expression, abundantly expressed in flowers. Weakly expressed in roots, leaves and siliques; and undetectable in 5-day-old seedlings. In the basal rosette leaves of 21-day-old plants, it is more abundant in leaves 6 and 7, which possess narrow elliptical laminae, than in leaves 1-4, which have round laminae, suggesting a possible correlation between its expression and the formation of elliptical leaf laminae in mature leaves.

It is found in the nucleus. Regulates differences in leaf patterning between juvenile and mature leaves by controlling differences in the development of primordia produced during juvenile and mature phases. Acts by activating transcription of the myb-domain protein AS1, a gene involved in leaf-axis specification. Associates with the promoter and the start of the transcribed region of AS1 and up-regulates expression of AS1 through acetylation of histones H3 and H4. This Arabidopsis thaliana (Mouse-ear cress) protein is Transcription factor GTE6 (GTE6).